A 412-amino-acid chain; its full sequence is Tyrosine--tRNA ligase (412 aa).

Y31 contacts L-tyrosine. The short motif at 36–45 is the 'HIGH' region element; the sequence is PTAPSLHIGH. Y162 and Q166 together coordinate L-tyrosine. The 'KMSKS' region motif lies at 222–226; sequence KIGKT. ATP is bound at residue K225. In terms of domain architecture, S4 RNA-binding spans 345 to 411; the sequence is KRWLDIVVEL…GKRKKQVIDL (67 aa).

Belongs to the class-I aminoacyl-tRNA synthetase family. TyrS type 1 subfamily. As to quaternary structure, homodimer.

The protein localises to the cytoplasm. The enzyme catalyses tRNA(Tyr) + L-tyrosine + ATP = L-tyrosyl-tRNA(Tyr) + AMP + diphosphate + H(+). In terms of biological role, catalyzes the attachment of tyrosine to tRNA(Tyr) in a two-step reaction: tyrosine is first activated by ATP to form Tyr-AMP and then transferred to the acceptor end of tRNA(Tyr). This is Tyrosine--tRNA ligase from Chlamydia trachomatis serovar L2 (strain ATCC VR-902B / DSM 19102 / 434/Bu).